We begin with the raw amino-acid sequence, 303 residues long: E3 ubiquitin-protein ligase CCNB1IP1 homolog (303 aa).

The RING-type; degenerate zinc finger occupies 3–42; the sequence is CNACWRELEGQAVSTTCGHLLCTEDAKKILSNDAACPICD. Residues 119 to 184 adopt a coiled-coil conformation; it reads LEEVHTAYQK…YESAKRSAIQ (66 aa). The segment at 201 to 268 is disordered; the sequence is VPNIMDSSDP…DIRPRQPARP (68 aa).

As to quaternary structure, interacts with ZIP4 and PTD. Expressed in young panicles.

The protein resides in the nucleus. The protein localises to the chromosome. It carries out the reaction S-ubiquitinyl-[E2 ubiquitin-conjugating enzyme]-L-cysteine + [acceptor protein]-L-lysine = [E2 ubiquitin-conjugating enzyme]-L-cysteine + N(6)-ubiquitinyl-[acceptor protein]-L-lysine.. It functions in the pathway protein modification; protein ubiquitination. Its function is as follows. Ubiquitin E3 ligase required for class I crossover (CO) formation during meiosis. This Oryza sativa subsp. japonica (Rice) protein is E3 ubiquitin-protein ligase CCNB1IP1 homolog.